The sequence spans 91 residues: Large ribosomal subunit protein uL23c (91 aa).

This sequence belongs to the universal ribosomal protein uL23 family. In terms of assembly, part of the 50S ribosomal subunit.

It localises to the plastid. The protein resides in the chloroplast. In terms of biological role, binds to 23S rRNA. This chain is Large ribosomal subunit protein uL23c (rpl23), found in Picea abies (Norway spruce).